Reading from the N-terminus, the 454-residue chain is Diaminobutyrate--2-oxoglutarate aminotransferase (454 aa).

K287 carries the post-translational modification N6-(pyridoxal phosphate)lysine.

Belongs to the class-III pyridoxal-phosphate-dependent aminotransferase family. The cofactor is pyridoxal 5'-phosphate.

It carries out the reaction L-2,4-diaminobutanoate + 2-oxoglutarate = L-aspartate 4-semialdehyde + L-glutamate. Its pathway is amine and polyamine biosynthesis; 1,3-diaminopropane biosynthesis; 1,3-diaminopropane from L-aspartate 4-semialdehyde: step 1/2. The sequence is that of Diaminobutyrate--2-oxoglutarate aminotransferase (dat) from Haemophilus influenzae (strain ATCC 51907 / DSM 11121 / KW20 / Rd).